A 46-amino-acid polypeptide reads, in one-letter code: Large ribosomal subunit protein bL36 (46 aa).

This sequence belongs to the bacterial ribosomal protein bL36 family.

In Salmonella agona (strain SL483), this protein is Large ribosomal subunit protein bL36.